The primary structure comprises 397 residues: S-adenosylmethionine synthase (397 aa).

His15 provides a ligand contact to ATP. Residue Asp17 coordinates Mg(2+). Glu43 provides a ligand contact to K(+). Glu56 and Gln99 together coordinate L-methionine. The segment at 99–109 (QSPDIAMGVNK) is flexible loop. Residues 175–177 (DGK), 241–242 (RF), Asp250, 256–257 (RK), Ala273, and Lys277 contribute to the ATP site. Asp250 lines the L-methionine pocket. Lys281 serves as a coordination point for L-methionine.

This sequence belongs to the AdoMet synthase family. Homotetramer; dimer of dimers. Mg(2+) is required as a cofactor. It depends on K(+) as a cofactor.

The protein resides in the cytoplasm. The catalysed reaction is L-methionine + ATP + H2O = S-adenosyl-L-methionine + phosphate + diphosphate. Its pathway is amino-acid biosynthesis; S-adenosyl-L-methionine biosynthesis; S-adenosyl-L-methionine from L-methionine: step 1/1. Functionally, catalyzes the formation of S-adenosylmethionine (AdoMet) from methionine and ATP. The overall synthetic reaction is composed of two sequential steps, AdoMet formation and the subsequent tripolyphosphate hydrolysis which occurs prior to release of AdoMet from the enzyme. The chain is S-adenosylmethionine synthase from Acetivibrio thermocellus (strain ATCC 27405 / DSM 1237 / JCM 9322 / NBRC 103400 / NCIMB 10682 / NRRL B-4536 / VPI 7372) (Clostridium thermocellum).